The sequence spans 226 residues: CRISPR-associated protein Cas5 (226 aa).

The protein belongs to the CRISPR-associated protein Cas5 family. Subtype I-A/Apern subfamily. Can form a Cascade complex with Csa5, Cas7, Cas3, Cas3' and Cas8a2.

Its function is as follows. CRISPR (clustered regularly interspaced short palindromic repeat) is an adaptive immune system that provides protection against mobile genetic elements (viruses, transposable elements and conjugative plasmids). CRISPR clusters contain spacers, sequences complementary to antecedent mobile elements, and target invading nucleic acids. CRISPR clusters are transcribed and processed into CRISPR RNA (crRNA). The polypeptide is CRISPR-associated protein Cas5 (cas5a) (Thermoproteus tenax (strain ATCC 35583 / DSM 2078 / JCM 9277 / NBRC 100435 / Kra 1)).